The sequence spans 298 residues: 4-hydroxy-tetrahydrodipicolinate synthase (298 aa).

Thr-51 lines the pyruvate pocket. Tyr-139 (proton donor/acceptor) is an active-site residue. Residue Lys-167 is the Schiff-base intermediate with substrate of the active site. Residue Ile-209 coordinates pyruvate.

This sequence belongs to the DapA family. Homotetramer; dimer of dimers.

The protein localises to the cytoplasm. It catalyses the reaction L-aspartate 4-semialdehyde + pyruvate = (2S,4S)-4-hydroxy-2,3,4,5-tetrahydrodipicolinate + H2O + H(+). Its pathway is amino-acid biosynthesis; L-lysine biosynthesis via DAP pathway; (S)-tetrahydrodipicolinate from L-aspartate: step 3/4. Functionally, catalyzes the condensation of (S)-aspartate-beta-semialdehyde [(S)-ASA] and pyruvate to 4-hydroxy-tetrahydrodipicolinate (HTPA). In Haemophilus influenzae (strain 86-028NP), this protein is 4-hydroxy-tetrahydrodipicolinate synthase.